A 260-amino-acid chain; its full sequence is Carbonic anhydrase 2 (260 aa).

The region spanning 3–259 is the Alpha-carbonic anhydrase domain; sequence HGWGYADHNG…LKDRKVCASF (257 aa). His-64 serves as the catalytic Proton donor/acceptor. Zn(2+)-binding residues include His-94, His-96, and His-119. Residue 198–199 participates in substrate binding; that stretch reads TT.

It belongs to the alpha-carbonic anhydrase family. Zn(2+) is required as a cofactor.

Its subcellular location is the cytoplasm. The enzyme catalyses hydrogencarbonate + H(+) = CO2 + H2O. Catalyzes the reversible hydration of carbon dioxide. This Pseudaspius hakonensis (Big-scaled redfin) protein is Carbonic anhydrase 2 (ca2).